The chain runs to 393 residues: Major outer membrane porin, serovar E (393 aa).

A signal peptide spans 1-22 (MKKLLKSVLVFAALSSASSLQA).

Belongs to the chlamydial porin (CP) (TC 1.B.2) family. As to quaternary structure, part of a disulfide cross-linked outer membrane complex (COMC) composed of the major outer membrane porin (MOMP), the small cysteine-rich protein (OmcA) and the large cysteine-rich periplasmic protein (OmcB).

It is found in the cell outer membrane. In terms of biological role, in elementary bodies (EBs, the infectious stage, which is able to survive outside the host cell) provides the structural integrity of the outer envelope through disulfide cross-links with the small cysteine-rich protein and the large cysteine-rich periplasmic protein. It has been described in publications as the Sarkosyl-insoluble COMC (Chlamydia outer membrane complex), and serves as the functional equivalent of peptidoglycan. Permits diffusion of specific solutes through the outer membrane. This Chlamydia trachomatis protein is Major outer membrane porin, serovar E (ompA).